Reading from the N-terminus, the 2261-residue chain is MAGLNEILLPEVHLNSPIVRYKLFYYILHGQLPNDLEPDDLGPLANQNWKAIRAEESQVHARLKQIRVELIARIPSLRWTRSQREIAILIWPRILPILQAYDLRQSMQLPTVWEKLTQSTVNLISDGLERVVLHISNQLTGKPNLFTRSRAGQDAKDYSIPSTRELSQIWFNNEWSGSVKTWLMIKYRMRQLITNQKTGELTDLVTIVDTRSTLCIITPELVALYSNEHKALTYLTFEMVLMVTDMLEGRLNVSSLCTASHYLSPLKKRIEILLTLVDDLALLMGDKVYGVVSSLESFVYAQLQYGDPVVDIKGTFYGFICNEILDLLTEDNIFTEEEANKVLLDLTSQFDNLSPDLTAELLCIMRLWGHPTLTASQAASKVRESMCAPKVLDFQTIMKTLAFFHAILINGYRRSHNGIWPPTTLHGNAPKSLIEMRHDNSELKYEYVLKNWKSISMLRIHKCFDASPDEDLSIFMKDKAISCPKQDWMGVFRRSLIKQRYRDANRPLPQPFNRRLLLNFLEDDRFDPIKELEYVTSGEYLRDPEFCASYSLKEKEIKATGRIFAKMTKRMRSCQVIAESLLANHAGKLMRENGVVLDQLKLTKSLLTMNQIGIISEHSRRSTADNMTLAHSGSNKHRINNSQFKKNKDSKHEMPDDGFEIAACFLTTDLTKYCLNWRYQVIIPFARTLNSMYGVPHLFEWIHLRLMRSTLYVGDPFNPPSDPTQLDLDTALNDDIFIVSPRGGIEGLCQKLWTMISISTIILSATEANTRVMSMVQGDNQAIAITTRVVRSLSHTEKKEQAYKASKLFFERLRANNHGIGHHLKEQETILSSDFFIYSKRVFYKGRILTQALKNVSKMCLTADILGECSQASCSNLATTVMRLTENGVEKDLCYFLNAFMTIRQLCYDLVFPQTKSLSQDITNAYLNHPILISRLCLLPSQLGGLNFFSCSRLFNRNIGDPLVSAIADVKRLIKAGCLDIWVLYNILGRRPGKGKWSTLAADPYTLNIDYLVPSTTFLKKHAQYTLMERSVNPMLRGVFSENAAEEEEELAQYLLDREVVMPRVAHVILAQSSCGRRKQIQGYLDSTRTIIRYSLEVRPLSAKKLNTVIEYNLLYLSYNLEIIEKPNIVQPFLNAINVDTCSIDIARSLRKLSWATLLNGRPIEGLETPDPIELVHGCLIIGSDECEHCSSGDDKFTWFFLPKGIRLDNDPAFNPPIRVPYIGSKTDERRVASMAYIKGASVSLKSALRLAGVYIWAFGDTEESWQDAYELASTRVNLTLEQLQSLTPLPTSANLVHRLDDGTTQLKFTPASSYAFSSFVHISNDCQVLEIDDQVTDSNLIYQQVMITGLALIETWNNPPINFSVYETTLHLHTGSSCCIRPVESCVVNPPLLPVPFINVPQMNKFVYDPEPLSLLEMEKIEDIAYQTRIGGLDQIPLLEKIPLLAHLTAKQMVNSITGLDEATSIVNDAVVQADYTSNWISECCYTYIDSVFVYSGWALLLELSYQMYYLRIQGIQGILDYVYMTLRRIPGMAITGISSTISHPRILRRCINLDVIAPINSPHIASLDYTKLSIDAVMWGTKQVLTNISQGIDYEIVVPSESQLTLSDRVLNLVARKLSLLAIIWANYNYPPKVKGMSPEDKCQALTTHLLQTVEYVEHIQIEKTNIRRMVIEPKLTAYPSNLFYLSRKLLNAIRDSEEGQFLIASYYNSFGYLEPILMESKIFNLSSSESASLTEFDFILNLELSETSLEKYSLPSLLMTAENMDNPFPQPPLHHVLRPLGLSSTSWYKTISVLNYISHMKIYDGAHLYLAEGSGASMSLIETFLPGETIWYNSLFNSGENPPQRNFAPLPTQFIESVPYRLIQAGIAAGSGVVQSFYPLWNGNSDITDLSTKTSVEYIIHKVGADTCALVHVDLEGVPGSMNSMLERAQVHALLITVTVLKPGGLLILKASWEPFNRFSFLLTILWQFFSTIRILRSSYSDPNNHEVYIIATLAVDPTTSSFTTALNRARTLNEQGFSLIPPELVSEYWRRRVEQGQIIQDRIDKVISECVRDQYLADNNIILQAGGTPSTRKWLDLPDYPSFNELQSEMARLITIHLKEVIEILKGQSSDHDTLLFTSYNVGPLGKINTILRLIVERILMYTVRNWCILPTQTRLTLRQSIELGEFRLRDVITPMEILKLSPNRKYLKSALNQSTFNHLMGETSDILLNRAYQKRIWKAIGCVIYCFGLLTPDVEDSERIDIDNDIPDYDIHGDII.

A disordered region spans residues 630–651; it reads AHSGSNKHRINNSQFKKNKDSK. The RdRp catalytic domain occupies 662 to 846; it reads AACFLTTDLT…IYSKRVFYKG (185 aa). The interval 919-1405 is PRNTase; it reads SQDITNAYLN…VPFINVPQMN (487 aa). One can recognise a Mononegavirus-type SAM-dependent 2'-O-MTase domain in the interval 1781-1994; sequence RPLGLSSTSW…DPNNHEVYII (214 aa).

This sequence belongs to the paramyxovirus L protein family. As to quaternary structure, interacts with the P protein; this interaction forms the polymerase complex. Interacts with host RUVBL1 and RUVBL2 (R2TP complex); this interaction regulates the viral transcription.

The protein resides in the virion. It catalyses the reaction RNA(n) + a ribonucleoside 5'-triphosphate = RNA(n+1) + diphosphate. The enzyme catalyses a 5'-end (5'-triphosphoguanosine)-adenylyl-adenylyl-cytidylyl-adenosine in mRNA + 2 S-adenosyl-L-methionine = a 5'-end (N(7)-methyl 5'-triphosphoguanosine)-(2'-O-methyladenylyl)-adenylyl-cytidylyl-adenosine in mRNA + 2 S-adenosyl-L-homocysteine + H(+). It carries out the reaction a 5'-end (5'-triphosphoguanosine)-adenylyl-adenylyl-cytidylyl-adenosine in mRNA + S-adenosyl-L-methionine = a 5'-end (5'-triphosphoguanosine)-(2'-O-methyladenylyl)-adenylyl-cytidylyl-adenosine in mRNA + S-adenosyl-L-homocysteine + H(+). The catalysed reaction is a 5'-end triphospho-adenylyl-adenylyl-cytidylyl-adenosine in mRNA + GDP + H(+) = a 5'-end (5'-triphosphoguanosine)-adenylyl-adenylyl-cytidylyl-adenosine in mRNA + diphosphate. It catalyses the reaction a 5'-end (5'-triphosphoguanosine)-(2'-O-methyladenylyl)-adenylyl-cytidylyl-adenosine in mRNA + S-adenosyl-L-methionine = a 5'-end (N(7)-methyl 5'-triphosphoguanosine)-(2'-O-methyladenylyl)-adenylyl-cytidylyl-adenosine in mRNA + S-adenosyl-L-homocysteine. The enzyme catalyses GTP + H2O = GDP + phosphate + H(+). Its function is as follows. RNA-directed RNA polymerase that catalyzes the transcription of viral mRNAs, their capping and polyadenylation. The template is composed of the viral RNA tightly encapsidated by the nucleoprotein (N). The viral polymerase binds to the genomic RNA at the 3' leader promoter, and transcribes subsequently all viral mRNAs with a decreasing efficiency. The first gene is the most transcribed, and the last the least transcribed. The viral phosphoprotein acts as a processivity factor. Capping is concomitant with initiation of mRNA transcription. Indeed, a GDP polyribonucleotidyl transferase (PRNTase) adds the cap structure when the nascent RNA chain length has reached few nucleotides. Ribose 2'-O methylation of viral mRNA cap precedes and facilitates subsequent guanine-N-7 methylation, both activities being carried by the viral polymerase. Polyadenylation of mRNAs occur by a stuttering mechanism at a slipery stop site present at the end viral genes. After finishing transcription of a mRNA, the polymerase can resume transcription of the downstream gene. Functionally, RNA-directed RNA polymerase that catalyzes the replication of viral genomic RNA. The template is composed of the viral RNA tightly encapsidated by the nucleoprotein (N). The replicase mode is dependent on intracellular N protein concentration. In this mode, the polymerase replicates the whole viral genome without recognizing transcriptional signals, and the replicated genome is not caped or polyadenylated. The protein is RNA-directed RNA polymerase L (L) of Mumps virus genotype N (strain L-Zagreb vaccine) (MuV).